A 383-amino-acid chain; its full sequence is uncharacterized protein (383 aa).

2 helical membrane-spanning segments follow: residues 49-69 (VDLL…GCVA) and 347-367 (LLGG…PVAG).

This sequence to M.tuberculosis Rv0874c.

The protein localises to the cell membrane. This is an uncharacterized protein from Mycobacterium tuberculosis (strain CDC 1551 / Oshkosh).